Here is a 492-residue protein sequence, read N- to C-terminus: Glutamate--cysteine ligase A, chloroplastic (492 aa).

A disulfide bridge connects residues cysteine 156 and cysteine 376.

The protein belongs to the carboxylate-amine ligase family. Glutamate--cysteine ligase type 2 subfamily. Homodimer or monomer when oxidized or reduced, respectively. In terms of processing, the Cys-156-Cys-376 disulfide bridge is known to modulate the enzyme activity according to the redox status. The oxidized form constitutes the active enzyme.

The protein localises to the plastid. Its subcellular location is the chloroplast. The enzyme catalyses L-cysteine + L-glutamate + ATP = gamma-L-glutamyl-L-cysteine + ADP + phosphate + H(+). Its pathway is sulfur metabolism; glutathione biosynthesis; glutathione from L-cysteine and L-glutamate: step 1/2. This chain is Glutamate--cysteine ligase A, chloroplastic (GSH1-1), found in Oryza sativa subsp. japonica (Rice).